A 411-amino-acid polypeptide reads, in one-letter code: Argininosuccinate synthase (411 aa).

Residues 10 to 18 (AYSGGLDTS) and A37 each bind ATP. 2 residues coordinate L-citrulline: Y89 and S94. Residue G119 participates in ATP binding. T121, N125, and D126 together coordinate L-aspartate. An L-citrulline-binding site is contributed by N125. Positions 129, 178, 187, 263, and 275 each coordinate L-citrulline.

It belongs to the argininosuccinate synthase family. Type 1 subfamily. As to quaternary structure, homotetramer.

The protein localises to the cytoplasm. The enzyme catalyses L-citrulline + L-aspartate + ATP = 2-(N(omega)-L-arginino)succinate + AMP + diphosphate + H(+). It functions in the pathway amino-acid biosynthesis; L-arginine biosynthesis; L-arginine from L-ornithine and carbamoyl phosphate: step 2/3. The chain is Argininosuccinate synthase from Aeromonas salmonicida (strain A449).